Consider the following 94-residue polypeptide: uncharacterized protein (94 aa).

In terms of tissue distribution, specifically expressed in retina and retinal pigment epithelium.

This is an uncharacterized protein from Homo sapiens (Human).